The following is a 187-amino-acid chain: Calmodulin-like protein 1 (187 aa).

Residue Ala2 is modified to N-acetylalanine. EF-hand domains lie at 8 to 43 (EQIG…LGQN), 44 to 79 (PTEA…KLRD), 81 to 116 (DSEE…IGER), and 117 to 152 (LTDE…KKRR). Asp21, Asp23, Asp25, Ser27, Glu32, Asp57, Asp59, Asn61, Asn63, Glu68, Asp94, Asp96, Asn98, Glu105, Asp130, Asp132, Asp134, Gln136, and Glu141 together coordinate Ca(2+). A disordered region spans residues 153–187 (KRIEEKRDHDGGSRTKSAGPSAAPASKRGQKCVIL). A compositionally biased stretch (basic and acidic residues) spans 154 to 165 (RIEEKRDHDGGS). The segment covering 169–178 (SAGPSAAPAS) has biased composition (low complexity). Position 184 is a cysteine methyl ester (Cys184). Residue Cys184 is the site of S-farnesyl cysteine attachment. A propeptide spans 185 to 187 (VIL) (removed in mature form).

The protein belongs to the calmodulin family.

The protein resides in the membrane. Functionally, calcium-binding protein that binds and activates CAMK1, a calcium/calmodulin-dependent kinase. The sequence is that of Calmodulin-like protein 1 (CML1) from Oryza sativa subsp. japonica (Rice).